The chain runs to 200 residues: Holliday junction branch migration complex subunit RuvA (200 aa).

Positions 1–63 (MIASVRGVVT…EDSLTLYGFA (63 aa)) are domain I. A domain II region spans residues 64–142 (DDDAKALFEL…PVPVGADSAA (79 aa)). Residues 143–151 (GVTTGAWPE) form a flexible linker region. The segment at 151-200 (EQVRQALVGLGWTAAQADQAVTAVAETVDGAVPPVPVLLRQAIRLLGRTR) is domain III.

The protein belongs to the RuvA family. As to quaternary structure, homotetramer. Forms an RuvA(8)-RuvB(12)-Holliday junction (HJ) complex. HJ DNA is sandwiched between 2 RuvA tetramers; dsDNA enters through RuvA and exits via RuvB. An RuvB hexamer assembles on each DNA strand where it exits the tetramer. Each RuvB hexamer is contacted by two RuvA subunits (via domain III) on 2 adjacent RuvB subunits; this complex drives branch migration. In the full resolvosome a probable DNA-RuvA(4)-RuvB(12)-RuvC(2) complex forms which resolves the HJ.

It localises to the cytoplasm. Its function is as follows. The RuvA-RuvB-RuvC complex processes Holliday junction (HJ) DNA during genetic recombination and DNA repair, while the RuvA-RuvB complex plays an important role in the rescue of blocked DNA replication forks via replication fork reversal (RFR). RuvA specifically binds to HJ cruciform DNA, conferring on it an open structure. The RuvB hexamer acts as an ATP-dependent pump, pulling dsDNA into and through the RuvAB complex. HJ branch migration allows RuvC to scan DNA until it finds its consensus sequence, where it cleaves and resolves the cruciform DNA. This Salinispora tropica (strain ATCC BAA-916 / DSM 44818 / JCM 13857 / NBRC 105044 / CNB-440) protein is Holliday junction branch migration complex subunit RuvA.